Here is a 646-residue protein sequence, read N- to C-terminus: Major capsid protein (646 aa).

Belongs to the NCLDV major capsid protein family. Homotrimer. The membrane-bound form, but not the cytosolic one, assembles into large complexes. Interacts with the minor capsid proteins M1249L and p17; these interactions form a rigid zipper structure that stabilizes the capsomers.

It is found in the virion. The protein resides in the host endoplasmic reticulum membrane. The protein localises to the host cytoplasm. Its subcellular location is the host cytosol. Capsid protein that self-assembles to form the pseudo-hexameric capsomers of the icosahedral capsid. The capsid is constructed of 2760 pseudo-hexameric capsomers and 12 pentameric capsomers, with a T=277 symmetry, about 200 nm in diameter. The capsid encapsulates the DNA-containing nucleoid, the core shell and the inner membrane. Plays an essential role in virion assembly. Involved in virus attachment to the host cell. In Ornithodoros (relapsing fever ticks), this protein is Major capsid protein.